We begin with the raw amino-acid sequence, 1026 residues long: Multidrug resistance protein MdtC (1026 aa).

11 helical membrane passes run 15–35 (ILIA…LPVA), 333–353 (EVEE…FLFL), 360–380 (LIPA…MYLC), 387–407 (LSLM…IVVL), 431–451 (VGFT…PLLL), 463–483 (FAVT…TLTP), 528–548 (LVGV…IAIP), 853–873 (LILI…LYES), 897–917 (LFNA…IGIV), 953–973 (PIMM…LSDG), and 984–1004 (ITIV…TPVV).

Belongs to the resistance-nodulation-cell division (RND) (TC 2.A.6) family. MdtC subfamily. Part of a tripartite efflux system composed of MdtA, MdtB and MdtC. MdtC forms a heteromultimer with MdtB.

The protein resides in the cell inner membrane. This chain is Multidrug resistance protein MdtC, found in Salmonella heidelberg (strain SL476).